The chain runs to 407 residues: Tyrosine--tRNA ligase 1 (407 aa).

Position 35 (Y35) interacts with L-tyrosine. The 'HIGH' region signature appears at 40-49; the sequence is PTGDSLHVGH. The L-tyrosine site is built by Y168 and Q172. Residues 228–232 carry the 'KMSKS' region motif; the sequence is KMGKT. K231 contributes to the ATP binding site. Residues 340–406 form the S4 RNA-binding domain; it reads SSILDVLVHT…GKKKYYKIVI (67 aa).

It belongs to the class-I aminoacyl-tRNA synthetase family. TyrS type 1 subfamily. As to quaternary structure, homodimer.

Its subcellular location is the cytoplasm. The catalysed reaction is tRNA(Tyr) + L-tyrosine + ATP = L-tyrosyl-tRNA(Tyr) + AMP + diphosphate + H(+). Catalyzes the attachment of tyrosine to tRNA(Tyr) in a two-step reaction: tyrosine is first activated by ATP to form Tyr-AMP and then transferred to the acceptor end of tRNA(Tyr). The protein is Tyrosine--tRNA ligase 1 of Clostridium acetobutylicum (strain ATCC 824 / DSM 792 / JCM 1419 / IAM 19013 / LMG 5710 / NBRC 13948 / NRRL B-527 / VKM B-1787 / 2291 / W).